The sequence spans 76 residues: Putative cation transport regulator ChaB (76 aa).

The protein belongs to the ChaB family. In terms of assembly, monomer.

In terms of biological role, might be a regulator of the sodium-potassium/proton antiporter ChaA. The chain is Putative cation transport regulator ChaB from Escherichia coli O157:H7.